A 315-amino-acid chain; its full sequence is MSQPRIGQKVVVDVPATTANLGPGFDCLGAALDLNNRFAMRRIEGSGERFELIIEGTYGSHLRGGPDNLVYRAAQRVWKAANMEPVALEARVRLAVPPARGLGSSATAIVAGLMGANALVGEPLSKEKLLELAIDIEGHPDNVVPSLLGGLCMTAKAASQRWRVVRCEWISSVKAVVAIPSIRLSTSEARRAMPKAIPVSDAVVNLGALTLLLQGLRTGNGDLIADGMHDRLHEPYRWRLIKGGDDVKAAALEAGAWGCAISGAGPSIIALCAEDKGQAVSRAMVKAWEAAGVASRAPVLNLQTSGSHWQPADAG.

97 to 107 (PPARGLGSSAT) contacts ATP.

It belongs to the GHMP kinase family. Homoserine kinase subfamily.

It is found in the cytoplasm. The enzyme catalyses L-homoserine + ATP = O-phospho-L-homoserine + ADP + H(+). It participates in amino-acid biosynthesis; L-threonine biosynthesis; L-threonine from L-aspartate: step 4/5. Its function is as follows. Catalyzes the ATP-dependent phosphorylation of L-homoserine to L-homoserine phosphate. In Parasynechococcus marenigrum (strain WH8102), this protein is Homoserine kinase.